Consider the following 347-residue polypeptide: MQTYGSRNVDYGWWAGNSRFADRTGLWLAAHVAQASFIVLWAGAITLFEVARYTPSIPMGEQGLILIPHLAALGIGVGAGGVVVNTFPYTAIGAVHLISSFVFAFGAIFHVRFGPESIGEGSDSKFAFSWDDPKQLGLILGHHLLLLGLGAIFFVGWIRFHGVYDSTIGDVRIVSNPGATILSVIFEYGWFTPEHNPFFVNNLEDLASGHAFIGVVLLSGGVWHITQEPFAWAQRLLASLFSAEGLLSSALAGLSMLGFAAAYFSAVNTLAYPIEFFGPPLELQFNIMPYFVDSVDLPAGVYSARAWLCNVHFYLAFFVLQGHLWHAIRAIGFDFKKVSNAFATLSN.

6 helical membrane passes run Gly25–Ile45, Leu64–Val84, Ala91–Val111, Leu206–Thr226, Leu247–Val267, and Leu308–Ile328.

The protein belongs to the PsbB/PsbC family. IsiA/Pcb subfamily. As to quaternary structure, the antenna complex consists of chlorophylls (a and b) and chlorophyll a/b binding proteins. Chlorophyll a serves as cofactor. Requires chlorophyll b as cofactor.

It localises to the cellular thylakoid membrane. Its function is as follows. The antenna complex functions as a light receptor, it captures and delivers excitation energy to photosystems II and I. The Prochlorales pcb genes are not related to higher plant LHCs. The chain is Chlorophyll a/b light-harvesting protein PcbB (pcbB) from Prochlorothrix hollandica.